Reading from the N-terminus, the 472-residue chain is Methanethiol oxidase (472 aa).

It belongs to the selenium-binding protein family.

It is found in the nucleus. Its subcellular location is the cytoplasm. It localises to the cytosol. The protein localises to the membrane. The catalysed reaction is methanethiol + O2 + H2O = hydrogen sulfide + formaldehyde + H2O2 + H(+). It participates in organosulfur degradation. Its function is as follows. Catalyzes the oxidation of methanethiol, an organosulfur compound known to be produced in substantial amounts by gut bacteria. Selenium-binding protein which may be involved in the sensing of reactive xenobiotics in the cytoplasm. May be involved in intra-Golgi protein transport. This is Methanethiol oxidase (selenbp1) from Xenopus tropicalis (Western clawed frog).